Reading from the N-terminus, the 89-residue chain is Class I hydrophobin D (89 aa).

The N-terminal stretch at 1–16 is a signal peptide; it reads MKFSLATIALAAAVVA. 4 disulfide bridges follow: cysteine 28-cysteine 68, cysteine 39-cysteine 60, cysteine 40-cysteine 52, and cysteine 69-cysteine 85. A glycan (N-linked (GlcNAc...) asparagine) is linked at asparagine 36.

It belongs to the fungal hydrophobin family.

The protein resides in the secreted. Its subcellular location is the cell wall. The protein localises to the vacuole. It is found in the cytoplasmic vesicle. In terms of biological role, aerial growth, conidiation, and dispersal of filamentous fungi in the environment rely upon a capability of their secreting small amphipathic proteins called hydrophobins (HPBs) with low sequence identity. Class I can self-assemble into an outermost layer of rodlet bundles on aerial cell surfaces, conferring cellular hydrophobicity that supports fungal growth, development and dispersal; whereas Class II form highly ordered films at water-air interfaces through intermolecular interactions but contribute nothing to the rodlet structure. Hyd1D contributes to certain cell wall-related features, such as hydrophobicity but is not involved in cell wall-related events during fungal proliferation in host hemocoel. Does not contribute to conidial hydrophobicity. Involved in insect hemocoel colonization independent of cell hydrophobicity. The polypeptide is Class I hydrophobin D (Beauveria bassiana (strain ARSEF 2860) (White muscardine disease fungus)).